The sequence spans 309 residues: Protein FdhE (309 aa).

The protein belongs to the FdhE family.

The protein resides in the cytoplasm. Functionally, necessary for formate dehydrogenase activity. The protein is Protein FdhE of Salmonella dublin (strain CT_02021853).